We begin with the raw amino-acid sequence, 377 residues long: MCVTSRADKMPSVKPKKKKIKKEINEVEEPEAGPEPAIEMEGLESRRQSESREPLTPEPHDNPPLKKKKKKKTHTFENEGEQQDHPNGDVQESPTDGEEVTKKSKKKRKNKMMENQSHNELGVEEDDIITDVHAPISQRSLFSAPLSHSHPIGKVFVEKNRRFQATDLSHDHLEEYMEVRPMWNTRDVAMRVHSGFRIIGLFSHGFLAGYAVWNIIVVYVLAGEQMTTLPNLLQQYHSLAYPAQSLLYLLLAISTVSAFDRVNLAKASMALRGFLTLDPAALASFLYFAALILSLSQQMTSDRIHLYPTANETLWPPGLEHQILQPWIVVNLVVALLVGLAWVFVATRPDMDYTEEFLMAMEVEEYPRHDDKHELAA.

Basic and acidic residues-rich tracts occupy residues 1-11, 43-64, and 74-87; these read MCVTSRADKMP, LESR…DNPP, and HTFE…DHPN. A disordered region spans residues 1–124; sequence MCVTSRADKM…NQSHNELGVE (124 aa). 4 helical membrane passes run 198–218, 239–259, 273–293, and 326–346; these read IIGL…IIVV, LAYP…VSAF, GFLT…ALIL, and PWIV…VFVA.

The protein belongs to the TMEM237 family.

The protein localises to the membrane. The protein resides in the cell projection. Its subcellular location is the cilium. In terms of biological role, component of the transition zone in primary cilia. Required for ciliogenesis. The polypeptide is Transmembrane protein 237A (tmem237a) (Danio rerio (Zebrafish)).